A 247-amino-acid chain; its full sequence is Triosephosphate isomerase (247 aa).

Asn10 and Lys12 together coordinate substrate. The Electrophile role is filled by His94. The active-site Proton acceptor is the Glu164.

It belongs to the triosephosphate isomerase family. In terms of assembly, homodimer.

The enzyme catalyses D-glyceraldehyde 3-phosphate = dihydroxyacetone phosphate. Its pathway is carbohydrate biosynthesis; gluconeogenesis. It functions in the pathway carbohydrate degradation; glycolysis; D-glyceraldehyde 3-phosphate from glycerone phosphate: step 1/1. The chain is Triosephosphate isomerase (Tpi) from Drosophila simulans (Fruit fly).